The primary structure comprises 772 residues: Cellulosomal-scaffolding protein B (772 aa).

Residues Asp1–Leu80 form the Cohesin 1 domain. Positions Gly81–Ser93 are linker (Pro/Thr-rich). A Cohesin 2 domain is found at Asp94–Lys240. Low complexity predominate over residues Asn235 to Pro276. Disordered stretches follow at residues Asn235–Val277 and Val438–Asp464. The linker (Pro/Thr-rich) stretch occupies residues Gly241–Pro272. The 159-residue stretch at Val277 to Gly435 folds into the CBM3 domain. The span at Val438–Pro461 shows a compositional bias: low complexity. The tract at residues Pro440–Pro461 is linker (Pro/Thr-rich). Residues Ser462–Leu607 enclose the Cohesin 3 domain. Positions Ile704 to Ala771 constitute a Dockerin domain.

In terms of processing, O-glycosylated on most but not all Thr residues of the linker units.

The protein localises to the secreted. Its function is as follows. Acts as a scaffolding protein in the cellulosome. It promotes binding of cellulose to the catalytic domains of the cellulolytic enzymes probably through the binding of the nine repeated domains with dockerin domains present in catalytic subunits of the cellulosome. This is Cellulosomal-scaffolding protein B (cipB) from Acetivibrio thermocellus (Hungateiclostridium thermocellum).